Reading from the N-terminus, the 351-residue chain is MKNKKLLVMAGGTGGHVFPAIAVAQTLQKQEWDICWLGTKDRMEAQLVPKYGIPIRFIQISGLRGKGIKALLNAPFAIFRAVLQAKKIIQEEKPDAVLGMGGYVSGPAGVAAKLCGVPIILHEQNAIAGLTNKLLGKIATCVLQAFPTAFPHAEVVGNPVREDLFEMPNPDIRFSDREEKLRVLVVGGSQGARVLNHTLPKVVTQLADKLEFRHQVGKGAVEEVSQLYGENLEQVKITEFIDNMAEAYAWADVVICRSGALTVCEIAAVGAAAIFVPFQHKDRQQYLNAKYLSDVGAAKIIEQADLTPEMLVNYLKNLTRENLLQMALKAKTMSMPNAAQRVAEVIKQYSN.

Residues 13–15, Asn-125, Arg-161, Ser-189, Ile-241, 260–265, and Gln-285 contribute to the UDP-N-acetyl-alpha-D-glucosamine site; these read TGG and ALTVCE.

Belongs to the glycosyltransferase 28 family. MurG subfamily.

The protein localises to the cell inner membrane. The catalysed reaction is di-trans,octa-cis-undecaprenyl diphospho-N-acetyl-alpha-D-muramoyl-L-alanyl-D-glutamyl-meso-2,6-diaminopimeloyl-D-alanyl-D-alanine + UDP-N-acetyl-alpha-D-glucosamine = di-trans,octa-cis-undecaprenyl diphospho-[N-acetyl-alpha-D-glucosaminyl-(1-&gt;4)]-N-acetyl-alpha-D-muramoyl-L-alanyl-D-glutamyl-meso-2,6-diaminopimeloyl-D-alanyl-D-alanine + UDP + H(+). The protein operates within cell wall biogenesis; peptidoglycan biosynthesis. Cell wall formation. Catalyzes the transfer of a GlcNAc subunit on undecaprenyl-pyrophosphoryl-MurNAc-pentapeptide (lipid intermediate I) to form undecaprenyl-pyrophosphoryl-MurNAc-(pentapeptide)GlcNAc (lipid intermediate II). This is UDP-N-acetylglucosamine--N-acetylmuramyl-(pentapeptide) pyrophosphoryl-undecaprenol N-acetylglucosamine transferase from Haemophilus influenzae (strain PittGG).